A 312-amino-acid polypeptide reads, in one-letter code: Acetaldehyde dehydrogenase (312 aa).

Residue 12-15 (SGNI) coordinates NAD(+). Catalysis depends on Cys132, which acts as the Acyl-thioester intermediate. NAD(+) contacts are provided by residues 163 to 171 (SAGPGTRAN) and Asn290.

Belongs to the acetaldehyde dehydrogenase family. Heterotetramer composed of two DmpG (aldolase) and two DmpF (dehydrogenase) subunits, which allows a direct channeling of acetaldehyde between the two active sites.

It catalyses the reaction acetaldehyde + NAD(+) + CoA = acetyl-CoA + NADH + H(+). It participates in aromatic compound metabolism; phenol degradation. Is not activated by Mn(2+), Mg(2+), Ca(2+), Zn(2+) or Co(2+). Its function is as follows. Catalyzes the conversion of acetaldehyde to acetyl-CoA, using NAD(+) and coenzyme A. Can also act on propanal and butanal to form propanoyl-CoA and butanoyl-CoA, respectively. Is the final enzyme in the meta-cleavage pathway for the degradation of aromatic compounds such as phenols, cresols and catechols. NADP(+) can replace NAD(+) but the rate of reaction is much slower. This chain is Acetaldehyde dehydrogenase (dmpF), found in Pseudomonas sp. (strain CF600).